Consider the following 579-residue polypeptide: uncharacterized protein (579 aa).

Transmembrane regions (helical) follow at residues Ala-20–Ile-40, Ala-54–Ala-74, Leu-86–Gly-106, Gly-142–Ala-162, Trp-174–Ile-194, Phe-204–Gln-224, Trp-234–Ala-254, Ile-279–Ala-299, Val-310–Ile-330, Pro-335–Cys-355, Leu-366–Val-386, and Met-467–Phe-487. The segment at Arg-516 to Leu-579 is disordered. A compositionally biased stretch (low complexity) spans Pro-526 to Ser-540. Residues Asp-570–Leu-579 show a composition bias toward polar residues.

The protein belongs to the major facilitator superfamily. EmrB family.

The protein localises to the cell membrane. This is an uncharacterized protein from Mycobacterium tuberculosis (strain ATCC 25618 / H37Rv).